A 771-amino-acid chain; its full sequence is MGRAGTGTGGEAVAAVVAGPLLLLLLARPPPASAGYSGKSEVGLVSEHFSQAPQRLSFYSWYGSARLFRFRVPPDAVLLRWLLQVSRESGAACTDAEITVHFRSGAPPVINPLGTSFPDDTAVQPSFQVGVPLSTTPRSNASVNVSHPAPGDWFVAAHLPPSSQKIELKGLAPTCAYVFQPELLVTRVVEISIMEPDVPLPQTLLSHPSYLKVFVPDYTRELLLELRDCVSNGSLGCPVRLTVGPVTLPSNFQKVLTCTGAPWPCRLLLPSPPWDRWLQVTAESLVGPLGTVAFSAVAALTACRPRSVTIQPLLQSSQNQSFNASSGLLSPSPDHQDLGRSGRVDRSPFCLTNYPVTREDMDVVSVHFQPLDRVSVRVCSDTPSVMRLRLNTGMDSGGSLTISLRANKTEMRNETVVVACVNAASPFLGFNTSLNCTTAFFQGYPLSLSAWSRRANLIIPYPETDNWYLSLQLMCPENAEDCEQAVVHVETTLYLVPCLNDCGPYGQCLLLRRHSYLYASCSCKAGWRGWSCTDNSTAQTVAQQRAATLLLTLSNLMFLAPIAVSVRRFFLVEASVYAYTMFFSTFYHACDQPGEAVLCILSYDTLQYCDFLGSGAAIWVTILCMARLKTVLKYVLFLLGTLVIAMSLQLDRRGMWNMLGPCLFAFVIMASMWAYRCGHRRQCYPTSWQRWAFYLLPGVSMASVGIAIYTSMMTSDNYYYTHSIWHILLAGSAALLLPPPDQPAEPWACSQKFPCHYQICKNDREELYAVT.

An N-terminal signal peptide occupies residues 1–34 (MGRAGTGTGGEAVAAVVAGPLLLLLLARPPPASA). At 35 to 545 (GYSGKSEVGL…STAQTVAQQR (511 aa)) the chain is on the extracellular side. The N-linked (GlcNAc...) asparagine glycan is linked to Asn144. Residues 322 to 343 (FNASSGLLSPSPDHQDLGRSGR) are disordered. Basic and acidic residues predominate over residues 334-343 (DHQDLGRSGR). Asn407 and Asn431 each carry an N-linked (GlcNAc...) asparagine glycan. The 37-residue stretch at 497–533 (PCLNDCGPYGQCLLLRRHSYLYASCSCKAGWRGWSCT) folds into the EGF-like domain. 3 disulfides stabilise this stretch: Cys498–Cys508, Cys502–Cys521, and Cys523–Cys532. The helical transmembrane segment at 546-566 (AATLLLTLSNLMFLAPIAVSV) threads the bilayer. The Cytoplasmic segment spans residues 567 to 568 (RR). The helical transmembrane segment at 569 to 589 (FFLVEASVYAYTMFFSTFYHA) threads the bilayer. Residues 590–605 (CDQPGEAVLCILSYDT) lie on the Extracellular side of the membrane. Residues 606 to 626 (LQYCDFLGSGAAIWVTILCMA) traverse the membrane as a helical segment. The Cytoplasmic portion of the chain corresponds to 627–629 (RLK). The chain crosses the membrane as a helical span at residues 630 to 650 (TVLKYVLFLLGTLVIAMSLQL). Topologically, residues 651–653 (DRR) are extracellular. The helical transmembrane segment at 654–674 (GMWNMLGPCLFAFVIMASMWA) threads the bilayer. Residues 675-690 (YRCGHRRQCYPTSWQR) lie on the Cytoplasmic side of the membrane. The chain crosses the membrane as a helical span at residues 691–711 (WAFYLLPGVSMASVGIAIYTS). Topologically, residues 712–717 (MMTSDN) are extracellular. A helical membrane pass occupies residues 718-738 (YYYTHSIWHILLAGSAALLLP). Residues 739 to 771 (PPDQPAEPWACSQKFPCHYQICKNDREELYAVT) are Cytoplasmic-facing.

It belongs to the TMEM8 family. Glycosylated. In terms of tissue distribution, expressed in pancreas, placenta, spleen, liver, kidney, bone marrow, peripheral blood leukocytes and tonsil.

It localises to the cell membrane. Its subcellular location is the lysosome membrane. It carries out the reaction a 1,2-diacyl-sn-glycero-3-phosphocholine + H2O = a 1-acyl-sn-glycero-3-phosphocholine + a fatty acid + H(+). In terms of biological role, involved in the lipid remodeling steps of GPI-anchor maturation. Lipid remodeling steps consist in the generation of 2 saturated fatty chains at the sn-2 position of GPI-anchor proteins (GPI-AP). Has phospholipase A2 activity that removes an acyl-chain at the sn-2 position of GPI-anchors during the remodeling of GPI. Required for the shedding of the GPI-AP CRIPTO, but not CFC1, at the cell surface. Shedding of CRIPTO modulates Nodal signaling by allowing soluble CRIPTO to act as a Nodal coreceptor on other cells. Also indirectly involved in the translocation of RAC1 from the cytosol to the plasma membrane by maintaining the steady state amount of CAV1-enriched plasma membrane subdomains, stabilizing RAC1 at the plasma membrane. In contrast to myomaker (TMEM8C), has no fusogenic activity. The sequence is that of Post-GPI attachment to proteins factor 6 from Homo sapiens (Human).